Consider the following 195-residue polypeptide: ATP-dependent Clp protease proteolytic subunit 2 (195 aa).

Ser98 functions as the Nucleophile in the catalytic mechanism. The active site involves His123.

It belongs to the peptidase S14 family. As to quaternary structure, fourteen ClpP subunits assemble into 2 heptameric rings which stack back to back to give a disk-like structure with a central cavity, resembling the structure of eukaryotic proteasomes.

The protein resides in the cytoplasm. The catalysed reaction is Hydrolysis of proteins to small peptides in the presence of ATP and magnesium. alpha-casein is the usual test substrate. In the absence of ATP, only oligopeptides shorter than five residues are hydrolyzed (such as succinyl-Leu-Tyr-|-NHMec, and Leu-Tyr-Leu-|-Tyr-Trp, in which cleavage of the -Tyr-|-Leu- and -Tyr-|-Trp bonds also occurs).. Cleaves peptides in various proteins in a process that requires ATP hydrolysis. Has a chymotrypsin-like activity. Plays a major role in the degradation of misfolded proteins. ClpXP2 is involved in the complete degradation of the Site-2 clipped anti-sigma-W factor RsiW. This results in the release of SigW and the transcription activation of the genes under the control of the sigma-W factor. In Shouchella clausii (strain KSM-K16) (Alkalihalobacillus clausii), this protein is ATP-dependent Clp protease proteolytic subunit 2.